The following is a 325-amino-acid chain: GMP reductase (325 aa).

Cys-174 (thioimidate intermediate) is an active-site residue. An NADP(+)-binding site is contributed by 203–226 (IIADGGIRTNGDIAKSIRFGANMV).

The protein belongs to the IMPDH/GMPR family. GuaC type 2 subfamily.

The catalysed reaction is IMP + NH4(+) + NADP(+) = GMP + NADPH + 2 H(+). Catalyzes the irreversible NADPH-dependent deamination of GMP to IMP. It functions in the conversion of nucleobase, nucleoside and nucleotide derivatives of G to A nucleotides, and in maintaining the intracellular balance of A and G nucleotides. This is GMP reductase from Latilactobacillus sakei subsp. sakei (strain 23K) (Lactobacillus sakei subsp. sakei).